Consider the following 196-residue polypeptide: Holliday junction branch migration complex subunit RuvA (196 aa).

Positions 1–64 (MIDRLRGQLV…EDAMLLFGFA (64 aa)) are domain I. The domain II stretch occupies residues 65–143 (TREEREAFDA…AAAGGGGGVA (79 aa)). A flexible linker region spans residues 144-153 (AGEGDGPFME). Residues 153–196 (EAREALTGLGYSLEEAERALRDVPPQETVEQYIKAALRKIGGRR) form a domain III region.

It belongs to the RuvA family. In terms of assembly, homotetramer. Forms an RuvA(8)-RuvB(12)-Holliday junction (HJ) complex. HJ DNA is sandwiched between 2 RuvA tetramers; dsDNA enters through RuvA and exits via RuvB. An RuvB hexamer assembles on each DNA strand where it exits the tetramer. Each RuvB hexamer is contacted by two RuvA subunits (via domain III) on 2 adjacent RuvB subunits; this complex drives branch migration. In the full resolvosome a probable DNA-RuvA(4)-RuvB(12)-RuvC(2) complex forms which resolves the HJ.

It is found in the cytoplasm. In terms of biological role, the RuvA-RuvB-RuvC complex processes Holliday junction (HJ) DNA during genetic recombination and DNA repair, while the RuvA-RuvB complex plays an important role in the rescue of blocked DNA replication forks via replication fork reversal (RFR). RuvA specifically binds to HJ cruciform DNA, conferring on it an open structure. The RuvB hexamer acts as an ATP-dependent pump, pulling dsDNA into and through the RuvAB complex. HJ branch migration allows RuvC to scan DNA until it finds its consensus sequence, where it cleaves and resolves the cruciform DNA. This chain is Holliday junction branch migration complex subunit RuvA, found in Rubrobacter xylanophilus (strain DSM 9941 / JCM 11954 / NBRC 16129 / PRD-1).